The chain runs to 60 residues: UPF0434 protein KPK_3615 (60 aa).

The protein belongs to the UPF0434 family.

This is UPF0434 protein KPK_3615 from Klebsiella pneumoniae (strain 342).